The sequence spans 1454 residues: Alpha-2-macroglobulin-like protein 1 (1454 aa).

Residues 1 to 17 (MWAQLLLGMLALSPAIA) form the signal peptide. A disulfide bond links Cys40 and Cys78. An N-linked (GlcNAc...) asparagine glycan is attached at Asn120. 2 cysteine pairs are disulfide-bonded: Cys241/Cys291 and Cys259/Cys279. N-linked (GlcNAc...) asparagine glycans are attached at residues Asn281 and Asn409. 7 disulfide bridges follow: Cys464/Cys557, Cys589/Cys769, Cys819/Cys847, Cys845/Cys881, Cys919/Cys1307, Cys1075/Cys1123, and Cys1338/Cys1453. The interval 695-726 (SHRSPEYSTAMGAGGGHPEAFESSTPLHQAED) is bait region. The N-linked (GlcNAc...) asparagine glycan is linked to Asn857. A cross-link (isoglutamyl cysteine thioester (Cys-Gln)) is located at residues 970 to 973 (CGEQ). N-linked (GlcNAc...) asparagine glycosylation is present at Asn1020.

It belongs to the protease inhibitor I39 (alpha-2-macroglobulin) family. Monomer. In the epidermis, expressed predominantly in the granular layer at the apical edge of keratinocytes (at protein level). Also detected in placenta, testis and thymus but not in epithelia of kidney, lung, small intestine or colon.

It localises to the secreted. Its function is as follows. Is able to inhibit all four classes of proteinases by a unique 'trapping' mechanism. This protein has a peptide stretch, called the 'bait region' which contains specific cleavage sites for different proteinases. When a proteinase cleaves the bait region, a conformational change is induced in the protein which traps the proteinase. The entrapped enzyme remains active against low molecular weight substrates (activity against high molecular weight substrates is greatly reduced). Following cleavage in the bait region a thioester bond is hydrolyzed and mediates the covalent binding of the protein to the proteinase. Displays inhibitory activity against chymotrypsin, papain, thermolysin, subtilisin A and, to a lesser extent, elastase but not trypsin. May play an important role during desquamation by inhibiting extracellular proteases. The protein is Alpha-2-macroglobulin-like protein 1 of Homo sapiens (Human).